The chain runs to 488 residues: E3 ubiquitin-protein ligase TRIM39 (488 aa).

Residues 29–70 (CSVCLEYLKEPVIIECGHNFCKACITRWWEDLERDFPCPVCR) form an RING-type zinc finger. Residues 102 to 143 (RDESLCSQHHEPLSLFCYEDQEAVCLICAISHTHRPHTVVPM) form a B box-type zinc finger. 4 residues coordinate Zn(2+): Cys-107, His-110, Cys-129, and His-135. The stretch at 181-250 (ELKRLVESRR…AHLAAEVEGK (70 aa)) forms a coiled coil. Interaction with CDKN1A regions lie at residues 268–307 (KCEK…QLIA) and 359–488 (TSGR…TDWE). Positions 289 to 484 (SNFPRQYFAL…NAAPLTIRPP (196 aa)) constitute a B30.2/SPRY domain.

This sequence belongs to the TRIM/RBCC family. Interacts with MOAP1. Interacts with CDKN1A. Post-translationally, autoubiquitinated.

The protein localises to the cytoplasm. The protein resides in the cytosol. It is found in the mitochondrion. Its subcellular location is the nucleus. It catalyses the reaction S-ubiquitinyl-[E2 ubiquitin-conjugating enzyme]-L-cysteine + [acceptor protein]-L-lysine = [E2 ubiquitin-conjugating enzyme]-L-cysteine + N(6)-ubiquitinyl-[acceptor protein]-L-lysine.. It participates in protein modification; protein ubiquitination. E3 ubiquitin-protein ligase. May facilitate apoptosis by inhibiting APC/C-Cdh1-mediated poly-ubiquitination and subsequent proteasome-mediated degradation of the pro-apoptotic protein MOAP1. Regulates the G1/S transition of the cell cycle and DNA damage-induced G2 arrest by stabilizing CDKN1A/p21. Positively regulates CDKN1A/p21 stability by competing with DTL for CDKN1A/p21 binding, therefore disrupting DCX(DTL) E3 ubiquitin ligase complex-mediated CDKN1A/p21 ubiquitination and degradation. The sequence is that of E3 ubiquitin-protein ligase TRIM39 (Trim39) from Mus musculus (Mouse).